A 1326-amino-acid polypeptide reads, in one-letter code: Coiled-coil domain-containing protein 171 (1326 aa).

Coiled-coil stretches lie at residues 53–294, 323–391, 450–561, 597–630, 660–707, 765–792, 979–1143, and 1217–1241; these read TTKH…RAAH, AEAV…RLQY, SFSV…AFHK, SELC…ICKN, WHRQ…EQLV, FKLE…MKKK, FTQR…KECV, and IMTL…LHTA. A disordered region spans residues 1306 to 1326; the sequence is SSHSSPVTMSANANRPTQIGL.

The polypeptide is Coiled-coil domain-containing protein 171 (CCDC171) (Homo sapiens (Human)).